Consider the following 163-residue polypeptide: Centrosomal protein of 19 kDa (163 aa).

Belongs to the CEP19 family. As to quaternary structure, interacts with CEP43; this interaction is required for its localization to the mother centriole. Interacts (via residues 121-150) with RABL2B. Interacts (via C-terminus) with CEP350; this interaction is required for its localization to the mother centriole.

The protein resides in the cytoplasm. It localises to the cytoskeleton. It is found in the microtubule organizing center. Its subcellular location is the centrosome. The protein localises to the centriole. The protein resides in the spindle pole. It localises to the cilium basal body. Functionally, required for ciliation. Recruits the RABL2B GTPase to the ciliary base to initiate ciliation. After specifically capturing the activated GTP-bound RABL2B, the CEP19-RABL2B complex binds intraflagellar transport (IFT) complex B from the large pool pre-docked at the base of the cilium and thus triggers its entry into the cilia. Involved in the early steps in cilia formation by recruiting the ciliary vesicles (CVs) to the distal end of the mother centriole where they fuse to initiate cilium assembly. Involved in microtubule (MT) anchoring to the centrosomes. This chain is Centrosomal protein of 19 kDa (CEP19), found in Homo sapiens (Human).